Reading from the N-terminus, the 211-residue chain is Interleukin-6 (211 aa).

Positions 1–25 (MNSLSTSTFSPVAFSLGLLLVMATA) are cleaved as a signal peptide. A disulfide bridge connects residues Cys71 and Cys77. Ser80 carries the post-translational modification Phosphoserine. Cys100 and Cys110 are joined by a disulfide.

It belongs to the IL-6 superfamily. As to quaternary structure, component of a hexamer of two molecules each of IL6, IL6R and IL6ST; first binds to IL6R to associate with the signaling subunit IL6ST. Interacts with IL6R (via the N-terminal ectodomain); this interaction may be affected by IL6R-binding with SORL1, hence decreasing IL6 cis signaling. Interacts with SORL1 (via the N-terminal ectodomain); this interaction leads to IL6 internalization and lysosomal degradation. May form a trimeric complex with the soluble SORL1 ectodomain and soluble IL6R receptor; this interaction might stabilize circulating IL6, hence promoting IL6 trans signaling.

It is found in the secreted. Its function is as follows. Cytokine with a wide variety of biological functions in immunity, tissue regeneration, and metabolism. Binds to IL6R, then the complex associates to the signaling subunit IL6ST/gp130 to trigger the intracellular IL6-signaling pathway. The interaction with the membrane-bound IL6R and IL6ST stimulates 'classic signaling', whereas the binding of IL6 and soluble IL6R to IL6ST stimulates 'trans-signaling'. Alternatively, 'cluster signaling' occurs when membrane-bound IL6:IL6R complexes on transmitter cells activate IL6ST receptors on neighboring receiver cells. In terms of biological role, IL6 is a potent inducer of the acute phase response. Rapid production of IL6 contributes to host defense during infection and tissue injury, but excessive IL6 synthesis is involved in disease pathology. In the innate immune response, is synthesized by myeloid cells, such as macrophages and dendritic cells, upon recognition of pathogens through toll-like receptors (TLRs) at the site of infection or tissue injury. In the adaptive immune response, is required for the differentiation of B cells into immunoglobulin-secreting cells. Plays a major role in the differentiation of CD4(+) T cell subsets. Essential factor for the development of T follicular helper (Tfh) cells that are required for the induction of germinal-center formation. Required to drive naive CD4(+) T cells to the Th17 lineage. Also required for proliferation of myeloma cells and the survival of plasmablast cells. Functionally, acts as an essential factor in bone homeostasis and on vessels directly or indirectly by induction of VEGF, resulting in increased angiogenesis activity and vascular permeability. Induces, through 'trans-signaling' and synergistically with IL1B and TNF, the production of VEGF. Involved in metabolic controls, is discharged into the bloodstream after muscle contraction increasing lipolysis and improving insulin resistance. 'Trans-signaling' in central nervous system also regulates energy and glucose homeostasis. Mediates, through GLP-1, crosstalk between insulin-sensitive tissues, intestinal L cells and pancreatic islets to adapt to changes in insulin demand. Also acts as a myokine. Plays a protective role during liver injury, being required for maintenance of tissue regeneration. Also has a pivotal role in iron metabolism by regulating HAMP/hepcidin expression upon inflammation or bacterial infection. Through activation of IL6ST-YAP-NOTCH pathway, induces inflammation-induced epithelial regeneration. The sequence is that of Interleukin-6 (IL6) from Lama glama (Llama).